The sequence spans 338 residues: Cinnamoyl-CoA reductase 1 (338 aa).

Residues glycine 22–glycine 28, arginine 47, lysine 53, aspartate 73–valine 74, valine 93–serine 95, tyrosine 165, lysine 169, proline 192–threonine 195, and serine 207 each bind NADP(+). An intrachain disulfide couples cysteine 158 to cysteine 166. Lysine 169 functions as the Proton donor in the catalytic mechanism.

It belongs to the NAD(P)-dependent epimerase/dehydratase family. Dihydroflavonol-4-reductase subfamily. As to quaternary structure, interacts with RAC1 in a GTP-dependent manner.

Its subcellular location is the cytoplasm. The catalysed reaction is (E)-cinnamaldehyde + NADP(+) + CoA = (E)-cinnamoyl-CoA + NADPH + H(+). Its pathway is aromatic compound metabolism; phenylpropanoid biosynthesis. Its activity is regulated as follows. Activated by the small GTPase RAC1. Its function is as follows. Involved in the latter stages of lignin biosynthesis. Catalyzes one of the last steps of monolignol biosynthesis, the conversion of cinnamoyl-CoAs into their corresponding cinnamaldehydes. Probably involved in the formation of lignin in defense responses. This chain is Cinnamoyl-CoA reductase 1, found in Oryza sativa subsp. japonica (Rice).